The sequence spans 185 residues: Ribosome-recycling factor (185 aa).

An N6-acetyllysine modification is found at Lys162.

It belongs to the RRF family.

Its subcellular location is the cytoplasm. Responsible for the release of ribosomes from messenger RNA at the termination of protein biosynthesis. May increase the efficiency of translation by recycling ribosomes from one round of translation to another. This chain is Ribosome-recycling factor, found in Shigella boydii serotype 18 (strain CDC 3083-94 / BS512).